Reading from the N-terminus, the 412-residue chain is Keratin, type I microfibrillar 48 kDa, component 8C-1 (412 aa).

Serine 1 is modified (N-acetylserine). A head region spans residues 1-55 (SFNFCLPNLSFRSSCSSRPCVPSSCCGTTLPGACNIPANVGSCNWFCEGSFDGNE). Residues 55 to 366 (EKETMQFLND…GLLDSEDCKL (312 aa)) enclose the IF rod domain. The interval 56–90 (KETMQFLNDRLASYLEKVRQLERENAELESRILER) is coil 1A. A linker 1 region spans residues 91-101 (SQQQEPLVCPN). The segment at 102–202 (YQSYFRTIEE…HEEEVNTLRS (101 aa)) is coil 1B. The linker 12 stretch occupies residues 203–218 (QLGDRLNVEVDAAPTV). Positions 219 to 362 (DLNRVLNETR…NTYRGLLDSE (144 aa)) are coil 2. The tail stretch occupies residues 363 to 412 (DCKLPCNPCATTNACGKTITPCISSPCAPAAPCTPCVPRSRCGPCNSYVR).

Belongs to the intermediate filament family.

In terms of biological role, wool microfibrillar keratin. In Ovis aries (Sheep), this protein is Keratin, type I microfibrillar 48 kDa, component 8C-1.